The primary structure comprises 300 residues: Tyrosine phosphatase-like protein J1 (300 aa).

The Tyrosine-protein phosphatase domain occupies 27-294 (LKREHEHIMQ…IFCYFTVLQF (268 aa)).

It belongs to the protein-tyrosine phosphatase family.

The sequence is that of Tyrosine phosphatase-like protein J1 (J1) from Microplitis demolitor (Parasitoid wasp).